Consider the following 556-residue polypeptide: Potassium-transporting ATPase potassium-binding subunit (556 aa).

10 helical membrane-spanning segments follow: residues 5–25 (LAGILFLASLVIALVAVHVPL), 65–85 (SVLAFSAVSLLFLFILQLVQG), 133–153 (GLAVQNFVSAAVGMAVAIALV), 176–196 (IRILLPISVIAAILLITGGAI), 249–269 (PTTWTNWIEIFLLLVIAFSLP), 283–303 (YAIVGVQAVLAVISWSATLFF), 377–397 (AGLYGILILAVITVFVAGLMV), 415–435 (LAATYFLVTPLIVLTGTAVAM), 483–503 (ALGLAMVFGRFLPIILALALA), and 526–546 (FVGMVAGVTLILVALTFLPML).

The protein belongs to the KdpA family. In terms of assembly, the system is composed of three essential subunits: KdpA, KdpB and KdpC.

The protein resides in the cell membrane. Its function is as follows. Part of the high-affinity ATP-driven potassium transport (or Kdp) system, which catalyzes the hydrolysis of ATP coupled with the electrogenic transport of potassium into the cytoplasm. This subunit binds the extracellular potassium ions and delivers the ions to the membrane domain of KdpB through an intramembrane tunnel. This Mycolicibacterium vanbaalenii (strain DSM 7251 / JCM 13017 / BCRC 16820 / KCTC 9966 / NRRL B-24157 / PYR-1) (Mycobacterium vanbaalenii) protein is Potassium-transporting ATPase potassium-binding subunit.